The chain runs to 382 residues: UDP-N-acetylglucosamine--N-acetylmuramyl-(pentapeptide) pyrophosphoryl-undecaprenol N-acetylglucosamine transferase (382 aa).

UDP-N-acetyl-alpha-D-glucosamine contacts are provided by residues 22 to 24 (TGG), Asn-134, Arg-186, Ser-212, 285 to 290 (ALTVAE), and Gln-311.

The protein belongs to the glycosyltransferase 28 family. MurG subfamily.

The protein resides in the cell inner membrane. The enzyme catalyses di-trans,octa-cis-undecaprenyl diphospho-N-acetyl-alpha-D-muramoyl-L-alanyl-D-glutamyl-meso-2,6-diaminopimeloyl-D-alanyl-D-alanine + UDP-N-acetyl-alpha-D-glucosamine = di-trans,octa-cis-undecaprenyl diphospho-[N-acetyl-alpha-D-glucosaminyl-(1-&gt;4)]-N-acetyl-alpha-D-muramoyl-L-alanyl-D-glutamyl-meso-2,6-diaminopimeloyl-D-alanyl-D-alanine + UDP + H(+). The protein operates within cell wall biogenesis; peptidoglycan biosynthesis. Cell wall formation. Catalyzes the transfer of a GlcNAc subunit on undecaprenyl-pyrophosphoryl-MurNAc-pentapeptide (lipid intermediate I) to form undecaprenyl-pyrophosphoryl-MurNAc-(pentapeptide)GlcNAc (lipid intermediate II). The chain is UDP-N-acetylglucosamine--N-acetylmuramyl-(pentapeptide) pyrophosphoryl-undecaprenol N-acetylglucosamine transferase from Pseudoalteromonas atlantica (strain T6c / ATCC BAA-1087).